The primary structure comprises 310 residues: Pantoate--beta-alanine ligase (310 aa).

32–39 (MGYLHEGH) lines the ATP pocket. Histidine 39 serves as the catalytic Proton donor. A (R)-pantoate-binding site is contributed by glutamine 63. Glutamine 63 provides a ligand contact to beta-alanine. 175–178 (GKKD) serves as a coordination point for ATP. Position 181 (glutamine 181) interacts with (R)-pantoate. Position 212–215 (212–215 (MSSR)) interacts with ATP.

Belongs to the pantothenate synthetase family. In terms of assembly, homodimer. Expressed in roots, cotyledons, leaves, stems, cauline leaves, stigma, sepals and petals.

The protein localises to the cytoplasm. Its subcellular location is the cytosol. The catalysed reaction is (R)-pantoate + beta-alanine + ATP = (R)-pantothenate + AMP + diphosphate + H(+). The protein operates within cofactor biosynthesis; (R)-pantothenate biosynthesis; (R)-pantothenate from (R)-pantoate and beta-alanine: step 1/1. Its activity is regulated as follows. Enzyme kinetics do not match Michaelis-Menten kinetics, suggesting allosteric behavior. Inhibited by high pantoate levels. In terms of biological role, catalyzes the condensation of pantoate with beta-alanine to form pantothenate. Essential for panthotenate biosynthesis. The protein is Pantoate--beta-alanine ligase of Arabidopsis thaliana (Mouse-ear cress).